The sequence spans 150 residues: UPF0506 protein SJCHGC02380 (150 aa).

Residues 1-18 (MNTCIQLLILCLVTVINS) form the signal peptide. N-linked (GlcNAc...) asparagine glycosylation is found at N20, N24, N36, N48, N52, and N110. Disulfide bonds link C116/C130, C123/C134, and C129/C139.

It belongs to the UPF0506 family.

Its subcellular location is the secreted. In Schistosoma japonicum (Blood fluke), this protein is UPF0506 protein SJCHGC02380.